The sequence spans 483 residues: Transmembrane protein 39B (483 aa).

N-linked (GlcNAc...) asparagine glycosylation is present at asparagine 9. The next 7 helical transmembrane spans lie at 76 to 96, 114 to 134, 158 to 182, 187 to 207, 281 to 301, 414 to 434, and 440 to 460; these read HLLFELQLFFCHLIALFVHYI, TSLNFHLIDFNVLTLTTIVLA, LLVATRFAVLTGTGWSLCRSIILLF, FFNLLFLCYPFGMYIPFLQLG, EVLLSSMLSAYYVAFVPVWFV, VLNILTTLEGVLIFYQLYSLL, and HHTISLALILFSNYYAFFKLL.

Belongs to the TMEM39 family.

The protein localises to the endoplasmic reticulum membrane. In terms of biological role, may protect the cells against DNA damage caused by exposure to the cold-warming stress and facilitates tissue damage repair during the recovery phase. The protein is Transmembrane protein 39B of Xenopus tropicalis (Western clawed frog).